Here is a 99-residue protein sequence, read N- to C-terminus: Large ribosomal subunit protein bL27 (99 aa).

Positions 1-9 (MLIMNLQLF) are excised as a propeptide.

It belongs to the bacterial ribosomal protein bL27 family. In terms of processing, the N-terminus is cleaved by ribosomal processing cysteine protease Prp.

The chain is Large ribosomal subunit protein bL27 from Clostridium beijerinckii (strain ATCC 51743 / NCIMB 8052) (Clostridium acetobutylicum).